The sequence spans 885 residues: Leucine--tRNA ligase (885 aa).

Positions 48–58 (PYPSGKLHMGH) match the 'HIGH' region motif. The 'KMSKS' region motif lies at 639–643 (TMSKS). Lys-642 lines the ATP pocket.

The protein belongs to the class-I aminoacyl-tRNA synthetase family.

It localises to the cytoplasm. The catalysed reaction is tRNA(Leu) + L-leucine + ATP = L-leucyl-tRNA(Leu) + AMP + diphosphate. The protein is Leucine--tRNA ligase of Bordetella bronchiseptica (strain ATCC BAA-588 / NCTC 13252 / RB50) (Alcaligenes bronchisepticus).